The sequence spans 341 residues: 5-formaminoimidazole-4-carboxamide-1-(beta)-D-ribofuranosyl 5'-monophosphate synthetase (341 aa).

5-amino-1-(5-phospho-beta-D-ribosyl)imidazole-4-carboxamide is bound by residues H10 and T77. Residues 106–317 (DREMKEKLMR…YYNLLFNETM (212 aa)) form the ATP-grasp domain. Residues 132 to 188 (EKLS…VLAY) and E210 contribute to the ATP site. N238 serves as a coordination point for 5-amino-1-(5-phospho-beta-D-ribosyl)imidazole-4-carboxamide. The Mg(2+) site is built by E277 and E290.

The protein belongs to the phosphohexose mutase family. Mg(2+) is required as a cofactor. Requires Mn(2+) as cofactor.

It catalyses the reaction 5-amino-1-(5-phospho-beta-D-ribosyl)imidazole-4-carboxamide + formate + ATP = 5-formamido-1-(5-phospho-D-ribosyl)imidazole-4-carboxamide + ADP + phosphate. It functions in the pathway purine metabolism; IMP biosynthesis via de novo pathway; 5-formamido-1-(5-phospho-D-ribosyl)imidazole-4-carboxamide from 5-amino-1-(5-phospho-D-ribosyl)imidazole-4-carboxamide (formate route): step 1/1. In terms of biological role, catalyzes the ATP- and formate-dependent formylation of 5-aminoimidazole-4-carboxamide-1-beta-d-ribofuranosyl 5'-monophosphate (AICAR) to 5-formaminoimidazole-4-carboxamide-1-beta-d-ribofuranosyl 5'-monophosphate (FAICAR) in the absence of folates. In Nitrosopumilus maritimus (strain SCM1), this protein is 5-formaminoimidazole-4-carboxamide-1-(beta)-D-ribofuranosyl 5'-monophosphate synthetase.